The primary structure comprises 167 residues: Ribosome maturation factor RimM (167 aa).

Residues 92–166 form the PRC barrel domain; sequence DDEFYHADLI…RIVADPPEEQ (75 aa).

It belongs to the RimM family. As to quaternary structure, binds ribosomal protein uS19.

It is found in the cytoplasm. An accessory protein needed during the final step in the assembly of 30S ribosomal subunit, possibly for assembly of the head region. Essential for efficient processing of 16S rRNA. May be needed both before and after RbfA during the maturation of 16S rRNA. It has affinity for free ribosomal 30S subunits but not for 70S ribosomes. This Paracoccus denitrificans (strain Pd 1222) protein is Ribosome maturation factor RimM.